The sequence spans 464 residues: Argininosuccinate lyase (464 aa).

It belongs to the lyase 1 family. Argininosuccinate lyase subfamily.

The protein resides in the cytoplasm. The enzyme catalyses 2-(N(omega)-L-arginino)succinate = fumarate + L-arginine. The protein operates within amino-acid biosynthesis; L-arginine biosynthesis; L-arginine from L-ornithine and carbamoyl phosphate: step 3/3. The protein is Argininosuccinate lyase of Pseudomonas savastanoi pv. phaseolicola (strain 1448A / Race 6) (Pseudomonas syringae pv. phaseolicola (strain 1448A / Race 6)).